The primary structure comprises 333 residues: Lipoyl synthase (333 aa).

The span at 1–15 (MSTLVESPVPSNDSQ) shows a compositional bias: polar residues. A disordered region spans residues 1 to 34 (MSTLVESPVPSNDSQAAAPAAYDPTQKQKSQAKT). Residues C80, C85, C91, C106, C110, C113, and S320 each coordinate [4Fe-4S] cluster. The Radical SAM core domain maps to 91-309 (CFGKGTATFM…EREAYAMGFT (219 aa)).

This sequence belongs to the radical SAM superfamily. Lipoyl synthase family. The cofactor is [4Fe-4S] cluster.

The protein localises to the cytoplasm. The catalysed reaction is [[Fe-S] cluster scaffold protein carrying a second [4Fe-4S](2+) cluster] + N(6)-octanoyl-L-lysyl-[protein] + 2 oxidized [2Fe-2S]-[ferredoxin] + 2 S-adenosyl-L-methionine + 4 H(+) = [[Fe-S] cluster scaffold protein] + N(6)-[(R)-dihydrolipoyl]-L-lysyl-[protein] + 4 Fe(3+) + 2 hydrogen sulfide + 2 5'-deoxyadenosine + 2 L-methionine + 2 reduced [2Fe-2S]-[ferredoxin]. The protein operates within protein modification; protein lipoylation via endogenous pathway; protein N(6)-(lipoyl)lysine from octanoyl-[acyl-carrier-protein]: step 2/2. In terms of biological role, catalyzes the radical-mediated insertion of two sulfur atoms into the C-6 and C-8 positions of the octanoyl moiety bound to the lipoyl domains of lipoate-dependent enzymes, thereby converting the octanoylated domains into lipoylated derivatives. This Bordetella bronchiseptica (strain ATCC BAA-588 / NCTC 13252 / RB50) (Alcaligenes bronchisepticus) protein is Lipoyl synthase.